Consider the following 230-residue polypeptide: V-type proton ATPase subunit E (230 aa).

This sequence belongs to the V-ATPase E subunit family. As to quaternary structure, V-ATPase is a heteromultimeric enzyme composed of a peripheral catalytic V1 complex (components A to H) attached to an integral membrane V0 proton pore complex (components: a, c, c', c'' and d).

Subunit of the peripheral V1 complex of vacuolar ATPase essential for assembly or catalytic function. V-ATPase is responsible for acidifying a variety of intracellular compartments in eukaryotic cells. This Citrus unshiu (Satsuma mandarin) protein is V-type proton ATPase subunit E (VATE).